A 232-amino-acid chain; its full sequence is Ribosome maturation protein SDO1 homolog (232 aa).

This sequence belongs to the SDO1/SBDS family.

The polypeptide is Ribosome maturation protein SDO1 homolog (Methanothermobacter thermautotrophicus (strain ATCC 29096 / DSM 1053 / JCM 10044 / NBRC 100330 / Delta H) (Methanobacterium thermoautotrophicum)).